A 318-amino-acid chain; its full sequence is Acetyl-coenzyme A carboxylase carboxyl transferase subunit alpha (318 aa).

A CoA carboxyltransferase C-terminal domain is found at 41–295 (RLTTKSQELT…KRQLIADLGS (255 aa)).

It belongs to the AccA family. In terms of assembly, acetyl-CoA carboxylase is a heterohexamer composed of biotin carboxyl carrier protein (AccB), biotin carboxylase (AccC) and two subunits each of ACCase subunit alpha (AccA) and ACCase subunit beta (AccD).

The protein resides in the cytoplasm. The catalysed reaction is N(6)-carboxybiotinyl-L-lysyl-[protein] + acetyl-CoA = N(6)-biotinyl-L-lysyl-[protein] + malonyl-CoA. The protein operates within lipid metabolism; malonyl-CoA biosynthesis; malonyl-CoA from acetyl-CoA: step 1/1. Component of the acetyl coenzyme A carboxylase (ACC) complex. First, biotin carboxylase catalyzes the carboxylation of biotin on its carrier protein (BCCP) and then the CO(2) group is transferred by the carboxyltransferase to acetyl-CoA to form malonyl-CoA. The polypeptide is Acetyl-coenzyme A carboxylase carboxyl transferase subunit alpha (Idiomarina loihiensis (strain ATCC BAA-735 / DSM 15497 / L2-TR)).